Reading from the N-terminus, the 380-residue chain is Probable dual-specificity RNA methyltransferase RlmN (380 aa).

The active-site Proton acceptor is Glu-123. The Radical SAM core domain maps to 129-362 (HEYGNSVCVT…VTIRREQGSD (234 aa)). Cys-136 and Cys-367 are oxidised to a cystine. Residues Cys-143, Cys-147, and Cys-150 each contribute to the [4Fe-4S] cluster site. S-adenosyl-L-methionine-binding positions include 193 to 194 (GE), Ser-225, 248 to 250 (SLH), and Asn-324. Cys-367 (S-methylcysteine intermediate) is an active-site residue.

Belongs to the radical SAM superfamily. RlmN family. Requires [4Fe-4S] cluster as cofactor.

It localises to the cytoplasm. It catalyses the reaction adenosine(2503) in 23S rRNA + 2 reduced [2Fe-2S]-[ferredoxin] + 2 S-adenosyl-L-methionine = 2-methyladenosine(2503) in 23S rRNA + 5'-deoxyadenosine + L-methionine + 2 oxidized [2Fe-2S]-[ferredoxin] + S-adenosyl-L-homocysteine. The enzyme catalyses adenosine(37) in tRNA + 2 reduced [2Fe-2S]-[ferredoxin] + 2 S-adenosyl-L-methionine = 2-methyladenosine(37) in tRNA + 5'-deoxyadenosine + L-methionine + 2 oxidized [2Fe-2S]-[ferredoxin] + S-adenosyl-L-homocysteine. Its function is as follows. Specifically methylates position 2 of adenine 2503 in 23S rRNA and position 2 of adenine 37 in tRNAs. The protein is Probable dual-specificity RNA methyltransferase RlmN of Lysinibacillus sphaericus (strain C3-41).